The chain runs to 332 residues: 2,3-diketo-L-gulonate reductase (332 aa).

His-44 functions as the Proton donor in the catalytic mechanism. NAD(+) contacts are provided by residues 168-174, 224-225, and 304-306; these read ITMVDMS, WK, and GHE.

The protein belongs to the LDH2/MDH2 oxidoreductase family. DlgD subfamily. In terms of assembly, homodimer.

The protein localises to the cytoplasm. The catalysed reaction is 3-dehydro-L-gulonate + NAD(+) = 2,3-dioxo-L-gulonate + NADH + H(+). The enzyme catalyses 3-dehydro-L-gulonate + NADP(+) = 2,3-dioxo-L-gulonate + NADPH + H(+). In terms of biological role, catalyzes the reduction of 2,3-diketo-L-gulonate in the presence of NADH, to form 3-keto-L-gulonate. In Pasteurella multocida (strain Pm70), this protein is 2,3-diketo-L-gulonate reductase.